Reading from the N-terminus, the 421-residue chain is Core-capsid bridging protein (421 aa).

This sequence belongs to the adenoviridae core-capsid bridging protein family. In terms of assembly, monomer. Homodimer. Exists in equilibrium between monomers and dimers in solution. Interacts with the histone-like nucleoprotein; this interactions bridge the virus core to the capsid. Interacts with core protein X; this interactions bridge the virus core to the capsid. Interacts with the endosome lysis protein VI; this interactions bridge the virus core to the capsid. Interacts with the peripentonal hexons. Interacts with host NPM1; this interaction might play a role in virus assembly.

It localises to the virion. The protein localises to the host nucleus. Its subcellular location is the host nucleolus. Associates loosely with the viral DNA to form an outer shell around the nucleoprotein-DNA complex and links it with the capsid by binding the endosome lysis protein. Dissociates from the viral genome during entry. Might be involved in nuclear capsid assembly of the viral particles through its association with NPM1/nucleophosmin. This chain is Core-capsid bridging protein, found in Canine adenovirus serotype 1 (strain CLL) (CAdV-1).